The following is an 83-amino-acid chain: Small ribosomal subunit protein uS17 (83 aa).

Belongs to the universal ribosomal protein uS17 family. Part of the 30S ribosomal subunit.

Functionally, one of the primary rRNA binding proteins, it binds specifically to the 5'-end of 16S ribosomal RNA. The protein is Small ribosomal subunit protein uS17 of Chlamydia abortus (strain DSM 27085 / S26/3) (Chlamydophila abortus).